The sequence spans 213 residues: Uracil phosphoribosyltransferase (213 aa).

5-phospho-alpha-D-ribose 1-diphosphate-binding positions include arginine 77, arginine 102, and 129–137; that span reads DPMLATGGS. Uracil contacts are provided by residues isoleucine 198 and 203–205; that span reads GDA. Residue aspartate 204 coordinates 5-phospho-alpha-D-ribose 1-diphosphate.

The protein belongs to the UPRTase family. The cofactor is Mg(2+).

The enzyme catalyses UMP + diphosphate = 5-phospho-alpha-D-ribose 1-diphosphate + uracil. Its pathway is pyrimidine metabolism; UMP biosynthesis via salvage pathway; UMP from uracil: step 1/1. Allosterically activated by GTP. Its function is as follows. Catalyzes the conversion of uracil and 5-phospho-alpha-D-ribose 1-diphosphate (PRPP) to UMP and diphosphate. The polypeptide is Uracil phosphoribosyltransferase (Mycobacteroides abscessus (strain ATCC 19977 / DSM 44196 / CCUG 20993 / CIP 104536 / JCM 13569 / NCTC 13031 / TMC 1543 / L948) (Mycobacterium abscessus)).